The chain runs to 497 residues: Cysteine desulfurase, mitochondrial (497 aa).

The transit peptide at 1–33 (MLKSTATRSITRLSQVYNVPAATYRACLVSRRF) directs the protein to the mitochondrion. Pyridoxal 5'-phosphate contacts are provided by residues 168–169 (AT), N248, Q276, and 296–298 (SSH). An N6-(pyridoxal phosphate)lysine modification is found at K299. T336 provides a ligand contact to pyridoxal 5'-phosphate. C421 acts as the Cysteine persulfide intermediate in catalysis. C421 is a binding site for [2Fe-2S] cluster.

Belongs to the class-V pyridoxal-phosphate-dependent aminotransferase family. NifS/IscS subfamily. Pyridoxal 5'-phosphate is required as a cofactor.

The protein localises to the mitochondrion. It carries out the reaction (sulfur carrier)-H + L-cysteine = (sulfur carrier)-SH + L-alanine. In terms of biological role, catalyzes the removal of elemental sulfur from cysteine to produce alanine. It supplies the inorganic sulfur for iron-sulfur (Fe-S) clusters. Plays a role in both tRNA-processing and mitochondrial metabolism. Involved in the 2-thio-modification of both 5-carboxymethylaminomethyl-2-thiouridine in mitochondrial tRNAs and 5-methoxycarbonylmethyl-2-thiouridine (mcm5s2U) in cytoplasmic tRNAs. The polypeptide is Cysteine desulfurase, mitochondrial (Saccharomyces cerevisiae (strain ATCC 204508 / S288c) (Baker's yeast)).